A 318-amino-acid chain; its full sequence is Biotin synthase (318 aa).

One can recognise a Radical SAM core domain in the interval 44–273 (LCGNKFDLCT…TVQIRLAGGR (230 aa)). [4Fe-4S] cluster is bound by residues C62, C66, and C69. 4 residues coordinate [2Fe-2S] cluster: S106, C138, C198, and R268.

This sequence belongs to the radical SAM superfamily. Biotin synthase family. In terms of assembly, homodimer. It depends on [4Fe-4S] cluster as a cofactor. [2Fe-2S] cluster is required as a cofactor.

It carries out the reaction (4R,5S)-dethiobiotin + (sulfur carrier)-SH + 2 reduced [2Fe-2S]-[ferredoxin] + 2 S-adenosyl-L-methionine = (sulfur carrier)-H + biotin + 2 5'-deoxyadenosine + 2 L-methionine + 2 oxidized [2Fe-2S]-[ferredoxin]. The protein operates within cofactor biosynthesis; biotin biosynthesis; biotin from 7,8-diaminononanoate: step 2/2. Functionally, catalyzes the conversion of dethiobiotin (DTB) to biotin by the insertion of a sulfur atom into dethiobiotin via a radical-based mechanism. The chain is Biotin synthase from Clostridium botulinum (strain Langeland / NCTC 10281 / Type F).